The following is a 306-amino-acid chain: Tryptophan 2,3-dioxygenase (306 aa).

The segment at 1 to 33 (MQPPGDDAAPRCPFAGAHAPDAPHVPEAAGDDA) is disordered. Substrate-binding positions include 75-79 (FIIQH), Y137, and R141. H264 provides a ligand contact to heme. Residue T278 coordinates substrate.

The protein belongs to the tryptophan 2,3-dioxygenase family. As to quaternary structure, homotetramer. Heme serves as cofactor.

It catalyses the reaction L-tryptophan + O2 = N-formyl-L-kynurenine. It participates in amino-acid degradation; L-tryptophan degradation via kynurenine pathway; L-kynurenine from L-tryptophan: step 1/2. Its function is as follows. Heme-dependent dioxygenase that catalyzes the oxidative cleavage of the L-tryptophan (L-Trp) pyrrole ring and converts L-tryptophan to N-formyl-L-kynurenine. Catalyzes the oxidative cleavage of the indole moiety. The chain is Tryptophan 2,3-dioxygenase from Burkholderia pseudomallei (strain 1106a).